We begin with the raw amino-acid sequence, 347 residues long: GMP reductase (347 aa).

108-131 (ADFEKTKQILDLNPALNFVCIDVA) is an NADP(+) binding site. Positions 181 and 183 each coordinate K(+). Cysteine 186 serves as the catalytic Thioimidate intermediate. 216–239 (IISDGGCTTPGDVAKAFGGGADFV) serves as a coordination point for NADP(+).

Belongs to the IMPDH/GMPR family. GuaC type 1 subfamily. As to quaternary structure, homotetramer.

It carries out the reaction IMP + NH4(+) + NADP(+) = GMP + NADPH + 2 H(+). Functionally, catalyzes the irreversible NADPH-dependent deamination of GMP to IMP. It functions in the conversion of nucleobase, nucleoside and nucleotide derivatives of G to A nucleotides, and in maintaining the intracellular balance of A and G nucleotides. This chain is GMP reductase, found in Escherichia coli O157:H7.